Here is a 145-residue protein sequence, read N- to C-terminus: Alpha-amylase/trypsin inhibitor CM1 (145 aa).

The N-terminal stretch at 1-25 is a signal peptide; the sequence is MASKSSISPLLLATVLVSVFAAATA.

Belongs to the protease inhibitor I6 (cereal trypsin/alpha-amylase inhibitor) family. In terms of assembly, subunit of the tetrameric inhibitor. In terms of tissue distribution, endosperm.

The protein resides in the secreted. Functionally, alpha-amylase/trypsin inhibitor. It could be involved in insect defense mechanisms. The polypeptide is Alpha-amylase/trypsin inhibitor CM1 (Triticum aestivum (Wheat)).